The chain runs to 364 residues: Chorismate synthase (364 aa).

The NADP(+) site is built by Arg-48 and Arg-54. FMN contacts are provided by residues 125-127, 238-239, Gly-278, 293-297, and Arg-319; these read RSS, NA, and KPTSS.

The protein belongs to the chorismate synthase family. Homotetramer. The cofactor is FMNH2.

It catalyses the reaction 5-O-(1-carboxyvinyl)-3-phosphoshikimate = chorismate + phosphate. It participates in metabolic intermediate biosynthesis; chorismate biosynthesis; chorismate from D-erythrose 4-phosphate and phosphoenolpyruvate: step 7/7. Functionally, catalyzes the anti-1,4-elimination of the C-3 phosphate and the C-6 proR hydrogen from 5-enolpyruvylshikimate-3-phosphate (EPSP) to yield chorismate, which is the branch point compound that serves as the starting substrate for the three terminal pathways of aromatic amino acid biosynthesis. This reaction introduces a second double bond into the aromatic ring system. This Shewanella woodyi (strain ATCC 51908 / MS32) protein is Chorismate synthase.